A 20-amino-acid chain; its full sequence is YAELKAILAKQIPEKQAXIN.

In Naegleria fowleri (Brain eating amoeba), this protein is Unknown protein NF003 from 2D-PAGE.